Reading from the N-terminus, the 482-residue chain is Cysteine--tRNA ligase (482 aa).

Cysteine 29 lines the Zn(2+) pocket. A 'HIGH' region motif is present at residues 31-41 (PTVYDFAHIGN). Zn(2+) is bound by residues cysteine 224, histidine 249, and glutamate 253. Residues 282–286 (KMSKS) carry the 'KMSKS' region motif. An ATP-binding site is contributed by lysine 285.

Belongs to the class-I aminoacyl-tRNA synthetase family. Monomer. Zn(2+) serves as cofactor.

Its subcellular location is the cytoplasm. It carries out the reaction tRNA(Cys) + L-cysteine + ATP = L-cysteinyl-tRNA(Cys) + AMP + diphosphate. This Nitrobacter hamburgensis (strain DSM 10229 / NCIMB 13809 / X14) protein is Cysteine--tRNA ligase.